Here is a 348-residue protein sequence, read N- to C-terminus: Protein RecA (348 aa).

64–71 (GPESSGKT) lines the ATP pocket.

This sequence belongs to the RecA family. Monomer; forms higher-order oligomers. Interacts with RecU. Interacts with DprA (smf). Interacts with RecD2.

The protein resides in the cytoplasm. The protein localises to the nucleoid. Its function is as follows. Multifunctional protein involved in homologous recombination, DNA repair and competence. Can catalyze the hydrolysis of (d)ATP in the presence of single-stranded (ss)DNA; prefers dATP at least in vitro, catalyzes the dATP-dependent uptake of ssDNA by duplex DNA, and the dATP-dependent hybridization of homologous ssDNA (strand exchange). RecA-ATP cannot catalyze homologous DNA strand exchange; SsbA and DprA activate strand exchange by RecA-ATP. It interacts with LexA causing its activation and leading to its autocatalytic cleavage. Hydrolysis of ATP in the presence of ssDNA is partially inhibited by RecU. Required for DNA transformation; protects transforming DNA from degradation, possibly in combination with DprA. Blocks replication of both leading and lagging strand DNA in the presence of RecO and SsbA; RecD2 is able to overcome this blockage. In terms of biological role, recruited to repair centers (RCs), foci that are the site of double-stranded DNA break(s), after RecN. Concomitant with the appearance of RecO at the RCs, RecA forms threads that extend from RCs toward the opposite cell half, possibly searching for sequence homology along the sister chromosome. The threads disappear after about 2 hours. Thread formation is absolutely dependent on RecJ or AadAB. Thread formation is also dependent on RarA. The protein is Protein RecA of Bacillus subtilis (strain 168).